A 482-amino-acid polypeptide reads, in one-letter code: O-phosphoseryl-tRNA(Sec) selenium transferase (482 aa).

The tetramerization stretch occupies residues 1–36 (MKSSFGKKEGEYSRLVSKSSNKLLNSLWEKKQIPEE). Arg69 is a pyridoxal 5'-phosphate binding site. Positions 90 to 100 (GRSGNLLEIQP) are phosphate loop (P-loop). Substrate-binding residues include Arg91, Ser92, and Gln99. Position 277 is an N6-(pyridoxal phosphate)lysine (Lys277). Arg306 lines the substrate pocket. Arg388 serves as a coordination point for tRNA. The tract at residues 461–482 (DRRGGSSGRRVPMNESFDMEND) is disordered.

Belongs to the SepSecS family. In terms of assembly, homotetramer formed by a catalytic dimer and a non-catalytic dimer serving as a binding platform that orients tRNASec for catalysis. Each tetramer binds the CCA ends of two tRNAs which point to the active sites of the catalytic dimer. It depends on pyridoxal 5'-phosphate as a cofactor.

Its subcellular location is the cytoplasm. The enzyme catalyses O-phospho-L-seryl-tRNA(Sec) + selenophosphate + H2O = L-selenocysteinyl-tRNA(Sec) + 2 phosphate. The protein operates within aminoacyl-tRNA biosynthesis; selenocysteinyl-tRNA(Sec) biosynthesis; selenocysteinyl-tRNA(Sec) from L-seryl-tRNA(Sec) (archaeal/eukaryal route): step 2/2. In terms of biological role, converts O-phosphoseryl-tRNA(Sec) to selenocysteinyl-tRNA(Sec) required for selenoprotein biosynthesis. The polypeptide is O-phosphoseryl-tRNA(Sec) selenium transferase (secs-1) (Caenorhabditis briggsae).